A 258-amino-acid chain; its full sequence is Imidazole glycerol phosphate synthase subunit HisF (258 aa).

Catalysis depends on residues Asp11 and Asp130.

It belongs to the HisA/HisF family. As to quaternary structure, heterodimer of HisH and HisF.

Its subcellular location is the cytoplasm. The catalysed reaction is 5-[(5-phospho-1-deoxy-D-ribulos-1-ylimino)methylamino]-1-(5-phospho-beta-D-ribosyl)imidazole-4-carboxamide + L-glutamine = D-erythro-1-(imidazol-4-yl)glycerol 3-phosphate + 5-amino-1-(5-phospho-beta-D-ribosyl)imidazole-4-carboxamide + L-glutamate + H(+). It functions in the pathway amino-acid biosynthesis; L-histidine biosynthesis; L-histidine from 5-phospho-alpha-D-ribose 1-diphosphate: step 5/9. IGPS catalyzes the conversion of PRFAR and glutamine to IGP, AICAR and glutamate. The HisF subunit catalyzes the cyclization activity that produces IGP and AICAR from PRFAR using the ammonia provided by the HisH subunit. The protein is Imidazole glycerol phosphate synthase subunit HisF of Roseiflexus sp. (strain RS-1).